Consider the following 343-residue polypeptide: Glycerol-3-phosphate dehydrogenase [NAD(P)+] (343 aa).

S11, W12, H32, R33, and K106 together coordinate NADPH. Residues K106, G136, and S138 each coordinate sn-glycerol 3-phosphate. A140 provides a ligand contact to NADPH. Residues K192, D245, S255, R256, and N257 each contribute to the sn-glycerol 3-phosphate site. K192 (proton acceptor) is an active-site residue. Residue R256 coordinates NADPH. Positions 280 and 282 each coordinate NADPH.

This sequence belongs to the NAD-dependent glycerol-3-phosphate dehydrogenase family.

The protein localises to the cytoplasm. It carries out the reaction sn-glycerol 3-phosphate + NAD(+) = dihydroxyacetone phosphate + NADH + H(+). It catalyses the reaction sn-glycerol 3-phosphate + NADP(+) = dihydroxyacetone phosphate + NADPH + H(+). It functions in the pathway membrane lipid metabolism; glycerophospholipid metabolism. Functionally, catalyzes the reduction of the glycolytic intermediate dihydroxyacetone phosphate (DHAP) to sn-glycerol 3-phosphate (G3P), the key precursor for phospholipid synthesis. The chain is Glycerol-3-phosphate dehydrogenase [NAD(P)+] from Geobacillus thermodenitrificans (strain NG80-2).